The sequence spans 457 residues: Argininosuccinate lyase (457 aa).

The protein belongs to the lyase 1 family. Argininosuccinate lyase subfamily.

It is found in the cytoplasm. It catalyses the reaction 2-(N(omega)-L-arginino)succinate = fumarate + L-arginine. It functions in the pathway amino-acid biosynthesis; L-arginine biosynthesis; L-arginine from L-ornithine and carbamoyl phosphate: step 3/3. In Staphylococcus carnosus (strain TM300), this protein is Argininosuccinate lyase.